The primary structure comprises 167 residues: NAD(P)H-quinone oxidoreductase subunit I, chloroplastic (167 aa).

4Fe-4S ferredoxin-type domains are found at residues 55-84 (GRIHFEFDKCIACEVCVRVCPIDLPVVDWK) and 95-124 (LNYSIDFGICIFCGNCVEYCPTNCLSMTEE). Positions 64, 67, 70, 74, 104, 107, 110, and 114 each coordinate [4Fe-4S] cluster.

This sequence belongs to the complex I 23 kDa subunit family. NDH is composed of at least 16 different subunits, 5 of which are encoded in the nucleus. The cofactor is [4Fe-4S] cluster.

It is found in the plastid. It localises to the chloroplast thylakoid membrane. The enzyme catalyses a plastoquinone + NADH + (n+1) H(+)(in) = a plastoquinol + NAD(+) + n H(+)(out). The catalysed reaction is a plastoquinone + NADPH + (n+1) H(+)(in) = a plastoquinol + NADP(+) + n H(+)(out). Its function is as follows. NDH shuttles electrons from NAD(P)H:plastoquinone, via FMN and iron-sulfur (Fe-S) centers, to quinones in the photosynthetic chain and possibly in a chloroplast respiratory chain. The immediate electron acceptor for the enzyme in this species is believed to be plastoquinone. Couples the redox reaction to proton translocation, and thus conserves the redox energy in a proton gradient. This Lobularia maritima (Sweet alyssum) protein is NAD(P)H-quinone oxidoreductase subunit I, chloroplastic.